We begin with the raw amino-acid sequence, 214 residues long: ATP phosphoribosyltransferase (214 aa).

Belongs to the ATP phosphoribosyltransferase family. Short subfamily. In terms of assembly, heteromultimer composed of HisG and HisZ subunits.

The protein resides in the cytoplasm. The enzyme catalyses 1-(5-phospho-beta-D-ribosyl)-ATP + diphosphate = 5-phospho-alpha-D-ribose 1-diphosphate + ATP. The protein operates within amino-acid biosynthesis; L-histidine biosynthesis; L-histidine from 5-phospho-alpha-D-ribose 1-diphosphate: step 1/9. In terms of biological role, catalyzes the condensation of ATP and 5-phosphoribose 1-diphosphate to form N'-(5'-phosphoribosyl)-ATP (PR-ATP). Has a crucial role in the pathway because the rate of histidine biosynthesis seems to be controlled primarily by regulation of HisG enzymatic activity. In Marinobacter nauticus (strain ATCC 700491 / DSM 11845 / VT8) (Marinobacter aquaeolei), this protein is ATP phosphoribosyltransferase.